The following is a 428-amino-acid chain: Lysophosphatidic acid phosphatase type 6 (428 aa).

The N-terminal 32 residues, 1-32 (MITGVFSMRLWTPVGVLTSLAYCLHQRRVALA), are a transit peptide targeting the mitochondrion. The interval 58 to 168 (RHGARSPLKP…VFIRSTNIFR (111 aa)) is substrate binding. His-59 acts as the Nucleophile in catalysis. The active-site Proton donor is Asp-335.

This sequence belongs to the histidine acid phosphatase family. In terms of assembly, monomer. In terms of tissue distribution, highly expressed in kidney, heart, small intestine, muscle, liver, prostate, testis, ovary and weakly expressed in thymus and colon.

Its subcellular location is the mitochondrion. It carries out the reaction a phosphate monoester + H2O = an alcohol + phosphate. The enzyme catalyses 1-(9Z-octadecenoyl)-sn-glycero-3-phosphate + H2O = 1-(9Z-octadecenoyl)-sn-glycerol + phosphate. Functionally, hydrolyzes lysophosphatidic acid (LPA) containing a medium length fatty acid chain to the corresponding monoacylglycerol. Has highest activity with lysophosphatidic acid containing myristate (C14:0), monounsaturated oleate (C18:1) or palmitate (C16:0), and lower activity with C18:0 and C6:0 lysophosphatidic acid. This chain is Lysophosphatidic acid phosphatase type 6 (ACP6), found in Homo sapiens (Human).